A 52-amino-acid chain; its full sequence is Photosystem II reaction center protein M (52 aa).

The helical transmembrane segment at 6–26 (FGFAASLLFVGVPTIFLIGLF) threads the bilayer. A disordered region spans residues 31-52 (DGEKSSFYSDTSKGRLSPEPKK). Residues 42–52 (SKGRLSPEPKK) are compositionally biased toward basic and acidic residues.

It belongs to the PsbM family. PSII is composed of 1 copy each of membrane proteins PsbA, PsbB, PsbC, PsbD, PsbE, PsbF, PsbH, PsbI, PsbJ, PsbK, PsbL, PsbM, PsbT, PsbX, PsbY, Psb30/Ycf12, peripheral proteins PsbO, CyanoQ (PsbQ), PsbU, PsbV and a large number of cofactors. It forms dimeric complexes.

The protein localises to the cellular thylakoid membrane. One of the components of the core complex of photosystem II (PSII). PSII is a light-driven water:plastoquinone oxidoreductase that uses light energy to abstract electrons from H(2)O, generating O(2) and a proton gradient subsequently used for ATP formation. It consists of a core antenna complex that captures photons, and an electron transfer chain that converts photonic excitation into a charge separation. This subunit is found at the monomer-monomer interface. The sequence is that of Photosystem II reaction center protein M from Prochlorococcus marinus (strain NATL1A).